Reading from the N-terminus, the 110-residue chain is AFLLAATLTISSHMQEAGAVKFDIKNQCGYTVWAAGLPGGGKRLDQGQTWTVNLAAGTASARFWGRTGCTFDASGKGSCQTGDCGRQLSCTVSGAVPATLAEYTQSDQDY.

The first 19 residues, 1 to 19 (AFLLAATLTISSHMQEAGA), serve as a signal peptide directing secretion.

It belongs to the thaumatin family.

This Juniperus virginiana (Eastern redcedar) protein is Pathogenesis-related protein.